We begin with the raw amino-acid sequence, 318 residues long: O-glucosyltransferase LpsA (318 aa).

It belongs to the glycosyltransferase 90 family.

The protein operates within protein modification; protein glycosylation. Involved in lipopolysaccharide core biosynthesis. This Dichelobacter nodosus (Bacteroides nodosus) protein is O-glucosyltransferase LpsA (lpsA).